We begin with the raw amino-acid sequence, 217 residues long: Uracil-DNA glycosylase (217 aa).

D62 (proton acceptor) is an active-site residue.

Belongs to the uracil-DNA glycosylase (UDG) superfamily. UNG family.

Its subcellular location is the cytoplasm. The catalysed reaction is Hydrolyzes single-stranded DNA or mismatched double-stranded DNA and polynucleotides, releasing free uracil.. Excises uracil residues from the DNA which can arise as a result of misincorporation of dUMP residues by DNA polymerase or due to deamination of cytosine. The chain is Uracil-DNA glycosylase from Streptococcus pyogenes serotype M3 (strain ATCC BAA-595 / MGAS315).